The chain runs to 175 residues: Zinc metalloproteinase-disintegrin-like catroriarin (175 aa).

The region spanning 1–63 (NPCCDAATCK…ECPADVFHKN (63 aa)) is the Disintegrin domain. Disulfide bonds link cysteine 3–cysteine 26, cysteine 17–cysteine 23, cysteine 22–cysteine 48, cysteine 35–cysteine 55, cysteine 42–cysteine 74, cysteine 67–cysteine 79, cysteine 101–cysteine 147, cysteine 114–cysteine 124, and cysteine 131–cysteine 171. The D/ECD-tripeptide signature appears at 41–43 (ECD). Positions 43, 44, 46, 58, and 59 each coordinate Ca(2+).

The protein belongs to the venom metalloproteinase (M12B) family. P-III subfamily. P-IIIa sub-subfamily. As to quaternary structure, monomer. Requires Zn(2+) as cofactor. Glycosylated. Expressed by the venom gland.

Its subcellular location is the secreted. Snake venom metalloproteinase that impairs hemostasis in the envenomed animal. In Crotalus atrox (Western diamondback rattlesnake), this protein is Zinc metalloproteinase-disintegrin-like catroriarin.